A 182-amino-acid chain; its full sequence is Pyruvoyl-dependent arginine decarboxylase (182 aa).

Pyruvic acid (Ser) is present on serine 44.

This sequence belongs to the PdaD family. Pyruvate is required as a cofactor.

The catalysed reaction is L-arginine + H(+) = agmatine + CO2. In Thermoplasma volcanium (strain ATCC 51530 / DSM 4299 / JCM 9571 / NBRC 15438 / GSS1), this protein is Pyruvoyl-dependent arginine decarboxylase.